The primary structure comprises 286 residues: Undecaprenyl-diphosphatase (286 aa).

The next 7 helical transmembrane spans lie at 43 to 63 (FWKMFSIVIQLGAILCLPIYF), 91 to 111 (LTIIAFLCTAIPAFLFTKIIG), 118 to 138 (IIMGSALLIGGIVMWIVDVMF), 150 to 170 (MSVGQAIWIGLCQVLSAVFPG), 189 to 209 (AAALEFSFFLSIPTMVVATCY), 236 to 256 (ITLAIGFIVSFIVAYFVVAWF), and 264 to 284 (GFVPFAVYRIVVGIAVLAWAL).

This sequence belongs to the UppP family.

It is found in the cell inner membrane. The enzyme catalyses di-trans,octa-cis-undecaprenyl diphosphate + H2O = di-trans,octa-cis-undecaprenyl phosphate + phosphate + H(+). Its function is as follows. Catalyzes the dephosphorylation of undecaprenyl diphosphate (UPP). Confers resistance to bacitracin. The chain is Undecaprenyl-diphosphatase from Koribacter versatilis (strain Ellin345).